A 364-amino-acid polypeptide reads, in one-letter code: Caffeic acid 3-O-methyltransferase (364 aa).

131-137 contacts substrate; the sequence is MNQDKVL. The substrate binding stretch occupies residues 163 to 181; sequence AFEYHGTDSRFNRVFNEGM. S-adenosyl-L-methionine contacts are provided by glycine 209, aspartate 232, aspartate 252, methionine 253, and lysine 266. The active-site Proton acceptor is histidine 270.

It belongs to the class I-like SAM-binding methyltransferase superfamily. Cation-independent O-methyltransferase family. COMT subfamily. As to quaternary structure, homodimer. As to expression, confined to the vascular tissues of organs undergoing lignification such as stems and roots.

It carries out the reaction (E)-caffeate + S-adenosyl-L-methionine = (E)-ferulate + S-adenosyl-L-homocysteine + H(+). The catalysed reaction is tricetin + 2 S-adenosyl-L-methionine = 3',5'-di-O-methyltricetin + 2 S-adenosyl-L-homocysteine + 2 H(+). The enzyme catalyses luteolin + S-adenosyl-L-methionine = chrysoeriol + S-adenosyl-L-homocysteine + H(+). It catalyses the reaction tricetin + S-adenosyl-L-methionine = 3'-O-methyltricetin + S-adenosyl-L-homocysteine + H(+). It participates in aromatic compound metabolism; phenylpropanoid biosynthesis. In terms of biological role, catalyzes the conversion of caffeic acid to ferulic acid and of 5-hydroxyferulic acid to sinapic acid. The resulting products may subsequently be converted to the corresponding alcohols that are incorporated into lignins. Can use the flavone tricetin (5,7,3',4',5'-pentahydroxyflavone) as the preferred substrate and give rise to its 3',5'-dimethyl derivative, tricin (3',5'-dimethoxy-5,7,4'-trihydroxyflavone), as the major product, and selgin to a lower extent. Tricin exhibits potential benefits for human health including relaxant effect on smooth muscle of intestinal tissues, antioxidant effect, antihistaminic activity, and growth inhibition of human malignant breast tumor cells and colon cancer cells. Can also use luteolin, quercetin and 5-hydroxyferulic acid (5HF) as substrates. The sequence is that of Caffeic acid 3-O-methyltransferase from Zea mays (Maize).